A 229-amino-acid chain; its full sequence is Putative N-acetylmannosamine-6-phosphate 2-epimerase (229 aa).

Belongs to the NanE family.

The catalysed reaction is an N-acyl-D-glucosamine 6-phosphate = an N-acyl-D-mannosamine 6-phosphate. Its pathway is amino-sugar metabolism; N-acetylneuraminate degradation; D-fructose 6-phosphate from N-acetylneuraminate: step 3/5. In terms of biological role, converts N-acetylmannosamine-6-phosphate (ManNAc-6-P) to N-acetylglucosamine-6-phosphate (GlcNAc-6-P). In Escherichia coli O8 (strain IAI1), this protein is Putative N-acetylmannosamine-6-phosphate 2-epimerase.